Here is a 496-residue protein sequence, read N- to C-terminus: Glycine receptor subunit beta (496 aa).

The N-terminal stretch at 1–22 (MKFSLAISFFILMSLLFEDACA) is a signal peptide. Topologically, residues 23–268 (KEKSSKKGKG…IFTLRRQVGF (246 aa)) are extracellular. Residues 32 to 53 (GKKKQYLCPSQQSPEDLARVPP) are disordered. A glycan (N-linked (GlcNAc...) asparagine) is linked at N54. Glycine contacts are provided by R108 and S174. A disulfide bridge connects residues C183 and C197. An N-linked (GlcNAc...) asparagine glycan is attached at N242. A disulfide bridge connects residues C243 and C255. T250 provides a ligand contact to glycine. Residues 269-289 (YMMGVYAPTLLIVVLSWLSFW) form a helical membrane-spanning segment. At 290-294 (INPDA) the chain is on the cytoplasmic side. The chain crosses the membrane as a helical span at residues 295 to 315 (SAARVPLGIFSVLSLASECTT). At 316–327 (LAAELPKVSYVK) the chain is on the extracellular side. A helical membrane pass occupies residues 328 to 349 (ALDVWLIACLLFGFASLVEYAV). Residues 350 to 471 (VQVMLNNPKR…KPVIPTAAKR (122 aa)) lie on the Cytoplasmic side of the membrane. The residue at position 391 (T391) is a Phosphothreonine. Residues 472-495 (IDLYARALFPFCFLFFNVIYWSIY) form a helical membrane-spanning segment. L496 is a topological domain (extracellular).

It belongs to the ligand-gated ion channel (TC 1.A.9) family. Glycine receptor (TC 1.A.9.3) subfamily. GLRB sub-subfamily. In terms of assembly, forms heteropentamers with glycin receptor alpha subunits. Heteropentamers with GLRA1 can be composed of two GLRA1 and three GLRB subunits, or three GLRA1 and two GLRB subunits, or four GLRA1 subunits and one GLRB subunit. Forms heteropentamers with GLRA2. Functional GLRB-GLRA2 heteropentamers contain four GLRA2 subunits and one GLRB subunit, although alternative subunit composition cannot be excluded. Forms a heteropentamer with GLRA3. Interacts with GPHN. Detected in spinal cord, brain and brain stem, especially in the periolivary region, spinal nuclei, trigeminal nucleus, medulla oblongata, pons and midbrain. Detected in the inner plexiform layer of the retina (at protein level). High levels of expression in cortex, hippocampus, thalamus and cerebellum. Detected in spinal cord.

It localises to the postsynaptic cell membrane. Its subcellular location is the synapse. The protein localises to the cell projection. It is found in the dendrite. The protein resides in the cell membrane. It localises to the cytoplasm. It catalyses the reaction chloride(in) = chloride(out). Its activity is regulated as follows. Channel opening is triggered by extracellular glycine. Heteropentameric channels composed of GLRB and GLRA1 are activated by lower glycine levels than homopentameric GLRA1. In terms of biological role, subunit of heteromeric glycine-gated chloride channels. Plays an important role in the down-regulation of neuronal excitability. Contributes to the generation of inhibitory postsynaptic currents. This chain is Glycine receptor subunit beta (Glrb), found in Mus musculus (Mouse).